Reading from the N-terminus, the 458-residue chain is 5'-adenylylsulfate reductase 3, chloroplastic (458 aa).

Positions Met1–Asp24 are disordered. Residues Met1–Val69 constitute a chloroplast transit peptide. Residues Ser8–Ser23 show a composition bias toward low complexity. Residues Ala70 to Gly319 form a reductase domain region. Positions Ala337–Arg458 constitute a Thioredoxin domain. Active-site nucleophile residues include Cys378 and Cys381. An intrachain disulfide couples Cys378 to Cys381.

It belongs to the APS reductase family. [4Fe-4S] cluster serves as cofactor. As to expression, leaves, roots and stem.

It is found in the plastid. It localises to the chloroplast. It catalyses the reaction glutathione disulfide + sulfite + AMP + 2 H(+) = adenosine 5'-phosphosulfate + 2 glutathione. Its activity is regulated as follows. Stimulated by sodium sulfate &gt; ammonium sulfate. Reduces sulfate for Cys biosynthesis. Substrate preference is adenosine-5'-phosphosulfate (APS) &gt;&gt; 3'-phosphoadenosine-5'-phosphosulfate (PAPS). Uses glutathione or DTT as source of protons. The polypeptide is 5'-adenylylsulfate reductase 3, chloroplastic (APR3) (Arabidopsis thaliana (Mouse-ear cress)).